We begin with the raw amino-acid sequence, 503 residues long: Pentatricopeptide repeat-containing protein At2g30100, chloroplastic (503 aa).

The transit peptide at Met1–Arg50 directs the protein to the chloroplast. PPR repeat units lie at residues Ile341–Pro375, Glu376–Arg410, and Lys411–Pro445.

The protein belongs to the PPR family. P subfamily.

It is found in the plastid. The protein resides in the chloroplast. The sequence is that of Pentatricopeptide repeat-containing protein At2g30100, chloroplastic from Arabidopsis thaliana (Mouse-ear cress).